A 151-amino-acid chain; its full sequence is Superoxide dismutase [Cu-Zn] 2 (151 aa).

3 residues coordinate Cu cation: His44, His46, and His61. An intrachain disulfide couples Cys55 to Cys144. Residues His61, His69, His78, and Asp81 each contribute to the Zn(2+) site. His118 lines the Cu cation pocket.

The protein belongs to the Cu-Zn superoxide dismutase family. Homodimer. Cu cation serves as cofactor. It depends on Zn(2+) as a cofactor.

Its subcellular location is the cytoplasm. It catalyses the reaction 2 superoxide + 2 H(+) = H2O2 + O2. Destroys radicals which are normally produced within the cells and which are toxic to biological systems. This is Superoxide dismutase [Cu-Zn] 2 (SODCC.1) from Zea mays (Maize).